The following is a 150-amino-acid chain: UPF0735 ACT domain-containing protein Helmi_18680 (150 aa).

In terms of domain architecture, ACT spans 72–147 (SVSLLLEHHP…GVRSAQLVGS (76 aa)).

Belongs to the UPF0735 family.

The polypeptide is UPF0735 ACT domain-containing protein Helmi_18680 (Heliobacterium modesticaldum (strain ATCC 51547 / Ice1)).